Here is a 38-residue protein sequence, read N- to C-terminus: Potassium channel toxin alpha-KTx 2.10 (38 aa).

3 disulfides stabilise this stretch: cysteine 7–cysteine 29, cysteine 13–cysteine 34, and cysteine 17–cysteine 36.

In terms of tissue distribution, expressed by the venom gland.

The protein resides in the secreted. Blocks human voltage-gated potassium (Kv) channel Kv1.2/KCNA2. Does not inhibit human Kv1.1/KCNA1 at 100nM concentration. The sequence is that of Potassium channel toxin alpha-KTx 2.10 from Centruroides bonito (Scorpion).